The following is a 387-amino-acid chain: Cytochrome b (387 aa).

A helical transmembrane segment spans residues 32–52 (LGSLLGLCLVIQIASGVFLAM). Positions 82 and 96 each coordinate heme b. Helical transmembrane passes span 85 to 105 (GASF…YYGS), 116 to 136 (IGVV…CLVY), 151 to 171 (LSAI…GFSV), 179 to 199 (FFAL…MHLM), 225 to 245 (FIFK…LFVF), 289 to 309 (LGGV…PYTD), 324 to 344 (LAFY…QLHV), and 350 to 370 (QLGQ…VPVI). 2 residues coordinate heme b: His-183 and His-197.

This sequence belongs to the cytochrome b family. As to quaternary structure, component of the ubiquinol-cytochrome c oxidoreductase (cytochrome b-c1 complex, complex III, CIII), a multisubunit enzyme composed of 10 subunits. The complex is composed of 3 respiratory subunits cytochrome b (COB), cytochrome c1 (CYT1) and Rieske protein (RIP1), 2 core protein subunits COR1 and QCR2, and 5 low-molecular weight protein subunits QCR6, QCR7, QCR8, QCR9 and QCR10. The complex exists as an obligatory dimer and forms supercomplexes (SCs) in the inner mitochondrial membrane with a monomer or a dimer of cytochrome c oxidase (complex IV, CIV), resulting in 2 different assemblies (supercomplexes III(2)IV and III(2)IV(2)). It depends on heme b as a cofactor.

It localises to the mitochondrion inner membrane. In terms of biological role, component of the ubiquinol-cytochrome c oxidoreductase, a multisubunit transmembrane complex that is part of the mitochondrial electron transport chain which drives oxidative phosphorylation. The complex plays an important role in the uptake of multiple carbon sources present in different host niches. The polypeptide is Cytochrome b (Candida albicans (strain SC5314 / ATCC MYA-2876) (Yeast)).